Here is a 292-residue protein sequence, read N- to C-terminus: Peroxidase 2 (292 aa).

Disulfide bonds link Cys7–Cys86, Cys40–Cys45, Cys92–Cys288, and Cys171–Cys199. The active-site Proton acceptor is His38. 5 residues coordinate Ca(2+): Asp39, Val42, Gly44, Asp46, and Ser48. A glycan (N-linked (GlcNAc...) asparagine) is linked at Asn68. Pro134 is a binding site for substrate. Residue Asn139 is glycosylated (N-linked (GlcNAc...) asparagine). A heme b-binding site is contributed by His164. Thr165 lines the Ca(2+) pocket. Asn179 carries N-linked (GlcNAc...) asparagine glycosylation. Ca(2+) contacts are provided by Asp210, Thr213, and Asp218.

This sequence belongs to the peroxidase family. Classical plant (class III) peroxidase subfamily. It depends on Ca(2+) as a cofactor. The cofactor is heme b.

It carries out the reaction 2 a phenolic donor + H2O2 = 2 a phenolic radical donor + 2 H2O. Removal of H(2)O(2), oxidation of toxic reductants, biosynthesis and degradation of lignin, suberization, auxin catabolism, response to environmental stresses such as wounding, pathogen attack and oxidative stress. These functions might be dependent on each isozyme/isoform in each plant tissue. This is Peroxidase 2 from Cucumis sativus (Cucumber).